The primary structure comprises 803 residues: Subtilisin-like protease SBT5.5 (803 aa).

The N-terminal stretch at 1-22 is a signal peptide; the sequence is MKRIFGIFIFLSLLLFLVPLLA. Positions 23-112 are cleaved as a propeptide — activation peptide; sequence SCTKEKQVYI…KSDPRKYKIH (90 aa). The region spanning 30–108 is the Inhibitor I9 domain; it reads VYIVYFGEHK…VSVFKSDPRK (79 aa). Residues 140-656 form the Peptidase S8 domain; the sequence is KYDVNDRFRV…SRHFRPTKAA (517 aa). The active-site Charge relay system is D169. N-linked (GlcNAc...) asparagine glycosylation is present at N202. H244 acts as the Charge relay system in catalysis. Residues 409–504 form the PA domain; that stretch reads YAPLVYAPDV…VFSSTVDRIL (96 aa). S589 serves as the catalytic Charge relay system. A glycan (N-linked (GlcNAc...) asparagine) is linked at N725.

This sequence belongs to the peptidase S8 family.

It localises to the secreted. This Arabidopsis thaliana (Mouse-ear cress) protein is Subtilisin-like protease SBT5.5.